The following is a 245-amino-acid chain: Ribosomal RNA small subunit methyltransferase G (245 aa).

S-adenosyl-L-methionine-binding positions include G80, F85, 103–105 (DAT), 131–132 (AE), and R150.

It belongs to the methyltransferase superfamily. RNA methyltransferase RsmG family.

It localises to the cytoplasm. In terms of biological role, specifically methylates the N7 position of a guanine in 16S rRNA. This chain is Ribosomal RNA small subunit methyltransferase G, found in Deinococcus geothermalis (strain DSM 11300 / CIP 105573 / AG-3a).